The following is a 415-amino-acid chain: uncharacterized protein (415 aa).

A TRAM domain is found at 1-52; that stretch reads MQDLTINAIGAQGDGLARTADGKPAFVPLTLPGEVVRAKMDGARGEVVEILA. [4Fe-4S] cluster contacts are provided by C62, C68, C71, and C147. Positions 252, 279, 299, and 347 each coordinate S-adenosyl-L-methionine. C373 serves as the catalytic Nucleophile.

The protein belongs to the class I-like SAM-binding methyltransferase superfamily. RNA M5U methyltransferase family.

This is an uncharacterized protein from Caulobacter vibrioides (strain ATCC 19089 / CIP 103742 / CB 15) (Caulobacter crescentus).